Consider the following 98-residue polypeptide: MVAIHKPAHDVILKPVVSEKSYAASDRGQYTFVVAPDANKVQIKQAIEEIFKVKVTNVNTLNRAGKKQRTRTGFGQRASQKRAIVTVAEGQTIDIFGN.

Belongs to the universal ribosomal protein uL23 family. In terms of assembly, part of the 50S ribosomal subunit. Contacts protein L29, and trigger factor when it is bound to the ribosome.

Functionally, one of the early assembly proteins it binds 23S rRNA. One of the proteins that surrounds the polypeptide exit tunnel on the outside of the ribosome. Forms the main docking site for trigger factor binding to the ribosome. The chain is Large ribosomal subunit protein uL23 from Bifidobacterium longum (strain DJO10A).